The following is a 226-amino-acid chain: PKHD-type hydroxylase Pfl01_0799 (226 aa).

The Fe2OG dioxygenase domain occupies 78–178 (KVFPPLLNCY…RYASFFWTQS (101 aa)). Residues H96, D98, and H159 each contribute to the Fe cation site. R169 serves as a coordination point for 2-oxoglutarate.

The cofactor is Fe(2+). L-ascorbate is required as a cofactor.

In Pseudomonas fluorescens (strain Pf0-1), this protein is PKHD-type hydroxylase Pfl01_0799.